The sequence spans 157 residues: Probable succinate transporter subunit YjjB (157 aa).

A run of 4 helical transmembrane segments spans residues 2 to 22, 55 to 75, 87 to 107, and 129 to 149; these read GIIS…IPAV, AGFN…SIGI, IFTV…TAMI, and FLKA…PGLW.

The protein belongs to the ThrE exporter (TC 2.A.79) family. The transporter is composed of YjjB and YjjP.

The protein localises to the cell inner membrane. Its function is as follows. Involved in succinate export with YjjP. Both proteins are required for export. The chain is Probable succinate transporter subunit YjjB from Klebsiella pneumoniae (strain 342).